The chain runs to 338 residues: UPF0284 protein TV0153 (338 aa).

This sequence belongs to the UPF0284 family.

The chain is UPF0284 protein TV0153 from Thermoplasma volcanium (strain ATCC 51530 / DSM 4299 / JCM 9571 / NBRC 15438 / GSS1).